The primary structure comprises 151 residues: Inactive oocyte-specific homeobox protein 2 (151 aa).

The disordered stretch occupies residues 1–97 (MAEGPSLHPK…PMASRKFRKE (97 aa)). A compositionally biased stretch (polar residues) spans 37 to 54 (MRQSPLVTPGSTTKSSLS).

The protein belongs to the paired homeobox family. Obox subfamily. As to expression, specifically expressed in oocytes and early embryos.

Functionally, in contrast to other Obox family proteins, displays a truncated homeobox domain and does not bind DNA. The sequence is that of Inactive oocyte-specific homeobox protein 2 from Mus musculus (Mouse).